The sequence spans 992 residues: RNA-binding motif protein, X-linked-like-3 (992 aa).

An RRM domain is found at 8–86 (EKLFVGGLNL…KAIMVAQTIK (79 aa)). Disordered stretches follow at residues 91-130 (SSRW…PDDG), 144-169 (APMP…DPGD), 188-207 (PDYC…GRDH), 278-385 (DHLP…DSSS), 397-511 (EEYQ…HRYR), 562-588 (SLDA…SHRY), and 644-992 (NSGG…QSRY). The segment covering 284-296 (YSGGRSSSSNSYS) has biased composition (low complexity). Residues 297–316 (RSDRYGEEGCYEEYRGRSPD) show a composition bias toward basic and acidic residues. Low complexity predominate over residues 318 to 334 (HSGGRNSSSNSYGQSHH). Basic and acidic residues predominate over residues 335–371 (YGGEGRYEEYRGRYEEYRGRSHEARSGGRSTDAHSGG). The span at 454–471 (THSGGRSSSSNSYGQSHR) shows a compositional bias: low complexity. Positions 472–488 (YGGEGHYEYRGRSHDAH) are enriched in basic and acidic residues. Composition is skewed to polar residues over residues 564-574 (DANSGGRSPNA), 644-664 (NSGG…SQSH), and 752-774 (DANS…SNSY). The span at 785-798 (HYEEYRGRSHDTHS) shows a compositional bias: basic and acidic residues. Positions 818–828 (GRNSFSNSYGQ) are enriched in polar residues. Composition is skewed to basic and acidic residues over residues 831-842 (HYGRGGRYEEYQ), 920-948 (SGDH…RPDR), and 981-992 (GRFERGEGQSRY).

This Pan troglodytes (Chimpanzee) protein is RNA-binding motif protein, X-linked-like-3 (RBMXL3).